Reading from the N-terminus, the 905-residue chain is Protein translocase subunit SecA (905 aa).

ATP-binding positions include glutamine 89, 107-111 (GEGKT), and aspartate 502. Zn(2+) contacts are provided by cysteine 887, cysteine 889, cysteine 898, and histidine 899.

The protein belongs to the SecA family. Monomer and homodimer. Part of the essential Sec protein translocation apparatus which comprises SecA, SecYEG and auxiliary proteins SecDF-YajC and YidC. It depends on Zn(2+) as a cofactor.

It localises to the cell inner membrane. The protein localises to the cytoplasm. It carries out the reaction ATP + H2O + cellular proteinSide 1 = ADP + phosphate + cellular proteinSide 2.. Part of the Sec protein translocase complex. Interacts with the SecYEG preprotein conducting channel. Has a central role in coupling the hydrolysis of ATP to the transfer of proteins into and across the cell membrane, serving both as a receptor for the preprotein-SecB complex and as an ATP-driven molecular motor driving the stepwise translocation of polypeptide chains across the membrane. This is Protein translocase subunit SecA from Rhizobium leguminosarum bv. trifolii (strain WSM2304).